We begin with the raw amino-acid sequence, 453 residues long: DDB1- and CUL4-associated factor 12 (453 aa).

The segment covering 1 to 12 (MARKAVSRKRKA) has biased composition (basic residues). The segment at 1–27 (MARKAVSRKRKAPALPGAGSDAQDPQF) is disordered. Positions 1–38 (MARKAVSRKRKAPALPGAGSDAQDPQFGWDHSLHKRKR) are required for nuclear location and interaction with MOV10. WD repeat units lie at residues 138–178 (QQGC…PVCV), 182–220 (GHKD…LTKS), 250–289 (PDNC…SKLL), and 338–375 (ERGS…FLEE).

The protein belongs to the WD repeat DCAF12 family. Component of the DCX(DCAF12) E3 ubiquitin ligase complex, at least composed of CUL4 (CUL4A or CUL4B), DDB1, DCAF12 and RBX1.

The protein resides in the cytoplasm. It localises to the cytoskeleton. It is found in the microtubule organizing center. The protein localises to the centrosome. Its subcellular location is the nucleus. Its pathway is protein modification; protein ubiquitination. Substrate-recognition component of a DCX (DDB1-CUL4-X-box) E3 ubiquitin-protein ligase complex of the DesCEND (destruction via C-end degrons) pathway, which recognizes a C-degron located at the extreme C terminus of target proteins, leading to their ubiquitination and degradation. The C-degron recognized by the DesCEND pathway is usually a motif of less than ten residues and can be present in full-length proteins, truncated proteins or proteolytically cleaved forms. The DCX(DCAF12) complex specifically recognizes proteins with a diglutamate (Glu-Glu) at the C-terminus, such as MAGEA3, MAGEA6 and CCT5, leading to their ubiquitination and degradation. Ubiquitination of MAGEA3, MAGEA6 by DCX(DCAF12) complex is required for starvation-induced autophagy. Also directly recognizes the C-terminal glutamate-leucine (Glu-Leu) degron as an alternative degron in proteins such as MOV10, leading to their ubiquitination and degradation. Controls the protein level of MOV10 during spermatogenesis and in T cells, especially after their activation. The chain is DDB1- and CUL4-associated factor 12 (DCAF12) from Bos taurus (Bovine).